The chain runs to 187 residues: POM121 and ZP3 fusion protein (187 aa).

The segment at 166–187 (GTPSHSRRQPRVVSQWSTSASL) is disordered. Residues 177–187 (VVSQWSTSASL) show a composition bias toward polar residues.

In terms of tissue distribution, expressed in spleen, thymus, pancreas, testis, ovary, small intestine, colon and lymphocytes.

The polypeptide is POM121 and ZP3 fusion protein (POMZP3) (Homo sapiens (Human)).